The sequence spans 2026 residues: E3 ubiquitin-protein ligase TRIP12 (2026 aa).

Polar residues-rich tracts occupy residues 1–10 (MSNRPNSNPG), 32–42 (GRNSLSLSVGS), and 73–84 (SSVSEPNITFSP). The tract at residues 1–437 (MSNRPNSNPG…SGESESDDSE (437 aa)) is disordered. 4 stretches are compositionally biased toward low complexity: residues 94–112 (SSHF…AISP), 135–161 (AEPA…STPS), 171–188 (LLSS…SAAG), and 199–241 (AAKP…SSAA). The segment covering 359–371 (QKTTGSCASTSRR) has biased composition (polar residues). The segment covering 379–391 (GAAEARRQEKMAD) has biased composition (basic and acidic residues). Over residues 392–404 (SDNNQDGANSSAA) the composition is skewed to polar residues. A compositionally biased stretch (low complexity) spans 412 to 430 (GASASSSVAGAVGMTTSGE). The region spanning 789-876 (MLKKGSAQTT…DPELAKCFIK (88 aa)) is the WWE domain. 2 disordered regions span residues 1008 to 1123 (SNVT…SVSN) and 1441 to 1470 (GCKD…KQDE). Over residues 1040 to 1053 (KRKRLPKRGPRRPK) the composition is skewed to basic residues. Positions 1056-1065 (PPRDDDKVDN) are enriched in basic and acidic residues. A compositionally biased stretch (low complexity) spans 1068–1079 (KSPTTTQSPKSS). A compositionally biased stretch (polar residues) spans 1094–1104 (TQANSANSEPS). A K-box region spans residues 1530-1604 (EIIPTGEFIN…AMQRLLDTNP (75 aa)). Positions 1919–2026 (PDHGYTHDSR…REGQQSFHLS (108 aa)) constitute an HECT domain. Residue C1993 is the Glycyl thioester intermediate of the active site.

This sequence belongs to the UPL family. K-HECT subfamily.

The protein localises to the nucleus. The protein resides in the nucleoplasm. The catalysed reaction is S-ubiquitinyl-[E2 ubiquitin-conjugating enzyme]-L-cysteine + [acceptor protein]-L-lysine = [E2 ubiquitin-conjugating enzyme]-L-cysteine + N(6)-ubiquitinyl-[acceptor protein]-L-lysine.. It participates in protein modification; protein ubiquitination. E3 ubiquitin-protein ligase involved in ubiquitin fusion degradation (UFD) pathway and regulation of DNA repair. Part of the ubiquitin fusion degradation (UFD) pathway, a process that mediates ubiquitination of protein at their N-terminus, regardless of the presence of lysine residues in target proteins. Acts as a key regulator of DNA damage response by acting as a suppressor of RNF168, an E3 ubiquitin-protein ligase that promotes accumulation of 'Lys-63'-linked histone H2A and H2AX at DNA damage sites, thereby acting as a guard against excessive spreading of ubiquitinated chromatin at damaged chromosomes. This Danio rerio (Zebrafish) protein is E3 ubiquitin-protein ligase TRIP12 (trip12).